A 537-amino-acid chain; its full sequence is MSAFQRLRQIALAIILTWGWKRALVAITAGALSVLALAPFNLFPVLFITFPVLVWLIDGAGAGRYRGIPAAALTGYWFGLGYFVPGLYWIGYAFFVDADVFAWLTPFAVLGLPAYLSIFTAIGFALARLLWTKNATRVLALAASLTIAEWLRGHALTGFPWNAFGYALSEPLPLAQTASLIGLWGMTFLTVAIFASPATLIDRTPDRRVAWRAPAAAVALLIAMSIFGAIRLSLHPTTMVAGAKLRLMQPNLQQDAKFNYAAKTEVMKKYLALSDRASGPQSTGVRDATILIWPESAFPFFLTREADAMAEIAELLPKGTVLITGSVRAPDLPRGTPITRAYNSIYVIDHDGSVLAVYDKLHLVPFGEFLPYQDLMEKLGFEQLTRVRGGFIAGTVRHALPMPGAPSALPLICYEAIFPGEVAGRNERPGWIVNLTNDGWFGISTGPYQHLEQARMRAIELGLPLVRSANTGISAVIDPVGRTVASLGLGVEGILDASLPAAIPPTIYARVGDVPAAVLVALAVLLAVRRRVAKRHP.

The next 6 membrane-spanning stretches (helical) occupy residues 10–30 (IALAIILTWGWKRALVAITAG), 37–57 (LAPFNLFPVLFITFPVLVWLI), 76–96 (YWFGLGYFVPGLYWIGYAFFV), 107–127 (FAVLGLPAYLSIFTAIGFALA), 181–201 (IGLWGMTFLTVAIFASPATLI), and 210–230 (AWRAPAAAVALLIAMSIFGAI). A CN hydrolase domain is found at 248 to 501 (MQPNLQQDAK…EGILDASLPA (254 aa)). Glu-295 serves as the catalytic Proton acceptor. Lys-360 is an active-site residue. Cys-413 (nucleophile) is an active-site residue. Residues 507-527 (IYARVGDVPAAVLVALAVLLA) form a helical membrane-spanning segment.

Belongs to the CN hydrolase family. Apolipoprotein N-acyltransferase subfamily.

It is found in the cell inner membrane. It catalyses the reaction N-terminal S-1,2-diacyl-sn-glyceryl-L-cysteinyl-[lipoprotein] + a glycerophospholipid = N-acyl-S-1,2-diacyl-sn-glyceryl-L-cysteinyl-[lipoprotein] + a 2-acyl-sn-glycero-3-phospholipid + H(+). Its pathway is protein modification; lipoprotein biosynthesis (N-acyl transfer). Functionally, catalyzes the phospholipid dependent N-acylation of the N-terminal cysteine of apolipoprotein, the last step in lipoprotein maturation. This chain is Apolipoprotein N-acyltransferase, found in Bradyrhizobium diazoefficiens (strain JCM 10833 / BCRC 13528 / IAM 13628 / NBRC 14792 / USDA 110).